A 430-amino-acid polypeptide reads, in one-letter code: Adenylosuccinate synthetase (430 aa).

GTP is bound by residues 17–23 and 45–47; these read GDEGKGK and GHT. Residue D18 is the Proton acceptor of the active site. 2 residues coordinate Mg(2+): D18 and G45. IMP is bound by residues 18-21, 43-46, T139, R153, N229, T244, and R308; these read DEGK and NAGH. Catalysis depends on H46, which acts as the Proton donor. A substrate-binding site is contributed by 304 to 310; the sequence is TVTGRRR. GTP contacts are provided by residues R310, 336-338, and 418-420; these read KLD and GVG.

The protein belongs to the adenylosuccinate synthetase family. As to quaternary structure, homodimer. The cofactor is Mg(2+).

Its subcellular location is the cytoplasm. The enzyme catalyses IMP + L-aspartate + GTP = N(6)-(1,2-dicarboxyethyl)-AMP + GDP + phosphate + 2 H(+). Its pathway is purine metabolism; AMP biosynthesis via de novo pathway; AMP from IMP: step 1/2. Functionally, plays an important role in the de novo pathway and in the salvage pathway of purine nucleotide biosynthesis. Catalyzes the first committed step in the biosynthesis of AMP from IMP. The chain is Adenylosuccinate synthetase from Cryptococcus neoformans var. neoformans serotype D (strain B-3501A) (Filobasidiella neoformans).